We begin with the raw amino-acid sequence, 457 residues long: MQKYLKEARSLLALGIPVIIAQFSQTAMGVVDTVMAGSVSATDMSAVAVGTSIWLPVILFGYGLLLALTPIIAQMNGSGRRNLIASQTQQGFWLAIFLSIIIIAILYNSKFLIDRQHNIDPILAEKAVGFIHAIMWGAPGYLFYQVLRNQCEGLSKTKPGMVISFLGLLINIPINYIFIYGKFGAPALGGVGCGVATASVYWVMFLLMRWYVKRASSQRDIRPKHRFAAPEWHILKRISALGLPIAMAVFFEITLFAIVALLISPLGVTAVAGHQIAQNFSSLMFMFPISLAAATTIRVGYNLGKKSIENARISAYTGIMVGLVFACLTATFSIILREPIALMYNDNPEVITMASHLMLFAALYQLSDAIQVVGAGVLRGYKDTRSIFYITFIAFWILGLPSGYILGLTDYIVPAMGPQGFWIGFIIGLTASAVMIFARISWTQKQPDEVILQHSTH.

Helical transmembrane passes span 11-31, 53-73, 93-113, 127-147, 160-180, 188-208, 243-263, 280-300, 316-336, 357-377, 387-407, and 418-438; these read LLALGIPVIIAQFSQTAMGVV, IWLPVILFGYGLLLALTPIIA, WLAIFLSIIIIAILYNSKFLI, AVGFIHAIMWGAPGYLFYQVL, GMVISFLGLLINIPINYIFIY, LGGVGCGVATASVYWVMFLLM, LPIAMAVFFEITLFAIVALLI, FSSLMFMFPISLAAATTIRVG, YTGIMVGLVFACLTATFSIIL, LMLFAALYQLSDAIQVVGAGV, IFYITFIAFWILGLPSGYILG, and PQGFWIGFIIGLTASAVMIFA.

It belongs to the multi antimicrobial extrusion (MATE) (TC 2.A.66.1) family. MdtK subfamily.

It is found in the cell inner membrane. Multidrug efflux pump that functions probably as a Na(+)/drug antiporter. In Photorhabdus laumondii subsp. laumondii (strain DSM 15139 / CIP 105565 / TT01) (Photorhabdus luminescens subsp. laumondii), this protein is Multidrug resistance protein MdtK.